The primary structure comprises 119 residues: Beta-2-microglobulin (119 aa).

Residues 1 to 20 (MARFVAVALLVLLSLSGLEA) form the signal peptide. Positions 25-114 (PKIQVYSRHP…VTFSTPKTVK (90 aa)) constitute an Ig-like C1-type domain. Cysteine 45 and cysteine 100 are disulfide-bonded.

It belongs to the beta-2-microglobulin family. In terms of assembly, heterodimer of an alpha chain and a beta chain. Beta-2-microglobulin is the beta-chain of major histocompatibility complex class I molecules.

The protein localises to the secreted. Functionally, component of the class I major histocompatibility complex (MHC). Involved in the presentation of peptide antigens to the immune system. The chain is Beta-2-microglobulin (B2M) from Plecturocebus moloch (Dusky titi monkey).